The following is a 461-amino-acid chain: Signal recognition particle receptor FtsY (461 aa).

One copy of the TPR repeat lies at 105–138 (FESLYNVAKIYHQLEKPDKALEYAQRAEKLVPYE). Residues 267–274 (GVNGSGKT), 349–353 (DTAGR), and 413–416 (TKLD) each bind GTP.

This sequence belongs to the GTP-binding SRP family. FtsY subfamily. In terms of assembly, part of the signal recognition particle protein translocation system, which is composed of SRP and FtsY.

Its subcellular location is the cell inner membrane. It localises to the cytoplasm. The enzyme catalyses GTP + H2O = GDP + phosphate + H(+). Involved in targeting and insertion of nascent membrane proteins into the cytoplasmic membrane. Acts as a receptor for the complex formed by the signal recognition particle (SRP) and the ribosome-nascent chain (RNC). The polypeptide is Signal recognition particle receptor FtsY (Aquifex aeolicus (strain VF5)).